The following is a 96-amino-acid chain: ESAT-6-like protein EsxR (96 aa).

This sequence belongs to the WXG100 family. ESAT-6 subfamily.

The protein localises to the secreted. The polypeptide is ESAT-6-like protein EsxR (Mycobacterium leprae (strain TN)).